The following is a 161-amino-acid chain: Anaerobic nitrite reductase GLB1 (161 aa).

The 149-residue stretch at 9-157 (VFTEEQEALV…LVAAIKSEMK (149 aa)) folds into the Globin domain. The short motif at 42-46 (EIAPS) is the Homodimerization element. Heme b is bound by residues Ser52, Lys66, His70, Arg100, and His105. The Homodimerization signature appears at 112-123 (NEHFETRFALLE).

This sequence belongs to the plant globin family. In terms of assembly, homodimer. It depends on heme b as a cofactor. Root specific.

Its subcellular location is the cytoplasm. The protein resides in the nucleus. It catalyses the reaction Fe(III)-heme b-[protein] + nitric oxide + H2O = Fe(II)-heme b-[protein] + nitrite + 2 H(+). In terms of biological role, phytoglobin that reduces nitrite to nitric oxide (NO) under anoxic conditions (e.g. during flooding or in waterlogged soil) and upon root nodulation. Required for general plant development and during nodulation, especially for the onset of symbiosis. Monitors nitric oxide (NO) levels during early phase of the nitrogen-fixing symbiosis and buffers oxygen in functioning nodules. May not function as an oxygen storage or transport protein. Has an unusually high affinity for O(2) through a hexacoordinate heme iron because of a very low dissociation constant. This chain is Anaerobic nitrite reductase GLB1 (GLB1), found in Trema tomentosum (Peach-leaf poison-bush).